Reading from the N-terminus, the 317-residue chain is Porphobilinogen deaminase (317 aa).

Cys-245 carries the S-(dipyrrolylmethanemethyl)cysteine modification.

This sequence belongs to the HMBS family. Monomer. Dipyrromethane is required as a cofactor.

It catalyses the reaction 4 porphobilinogen + H2O = hydroxymethylbilane + 4 NH4(+). It functions in the pathway porphyrin-containing compound metabolism; protoporphyrin-IX biosynthesis; coproporphyrinogen-III from 5-aminolevulinate: step 2/4. Its pathway is porphyrin-containing compound metabolism; chlorophyll biosynthesis. Its function is as follows. Tetrapolymerization of the monopyrrole PBG into the hydroxymethylbilane pre-uroporphyrinogen in several discrete steps. The sequence is that of Porphobilinogen deaminase from Prochlorococcus marinus (strain MIT 9313).